Here is a 515-residue protein sequence, read N- to C-terminus: Aldehyde dehydrogenase tropH (515 aa).

Gly-238 to Gly-243 is a binding site for NAD(+). The active-site Proton acceptor is Glu-260. Cys-295 (nucleophile) is an active-site residue.

Belongs to the aldehyde dehydrogenase family.

It catalyses the reaction an aldehyde + NAD(+) + H2O = a carboxylate + NADH + 2 H(+). It functions in the pathway secondary metabolite biosynthesis. Functionally, aldehyde dehydrogenase; part of the gene cluster that mediates the biosynthesis of the tropolone class of fungal maleic anhydrides. The pathway begins with the synthesis of 3-methylorcinaldehyde by the non-reducing polyketide synthase (PKS) tropA. 3-methylorcinaldehyde is the substrate for the FAD-dependent monooxygenase tropB to yield a dearomatized hydroxycyclohexadione. The 2-oxoglutarate-dependent dioxygenase tropC then performs the oxidative ring expansion to provide the first tropolone metabolite stipitaldehyde. Trop D converts stipitaldehyde into stipitacetal which is in turn converted to stipitalide by the short-chain dehydrogenase/reductase tropE. The next steps involve tropF, tropG, tropH, tropI and tropJ to form successive tropolone maleic anhydrides including stipitaldehydic, stipitatonic and stipitatic acids. This chain is Aldehyde dehydrogenase tropH, found in Talaromyces stipitatus (strain ATCC 10500 / CBS 375.48 / QM 6759 / NRRL 1006) (Penicillium stipitatum).